The chain runs to 402 residues: Multidrug resistance protein MdtH (402 aa).

Residues methionine 1–lysine 12 lie on the Cytoplasmic side of the membrane. The helical transmembrane segment at tyrosine 13–isoleucine 33 threads the bilayer. Topologically, residues serine 34 to glutamate 98 are periplasmic. The chain crosses the membrane as a helical span at residues proline 99–phenylalanine 116. The Cytoplasmic portion of the chain corresponds to aspartate 117 to serine 138. Residues leucine 139–leucine 159 traverse the membrane as a helical segment. Over glutamine 160 to arginine 164 the chain is Periplasmic. The helical transmembrane segment at leucine 165–leucine 185 threads the bilayer. The Cytoplasmic segment spans residues proline 186–tyrosine 213. A helical transmembrane segment spans residues valine 214–methionine 234. Residues valine 235–serine 243 are Periplasmic-facing. The chain crosses the membrane as a helical span at residues alanine 244–alanine 264. At arginine 265–arginine 276 the chain is on the cytoplasmic side. Residues leucine 277–leucine 297 form a helical membrane-spanning segment. Over glutamine 298–glutamine 299 the chain is Periplasmic. A helical transmembrane segment spans residues leucine 300–threonine 320. Topologically, residues leucine 321–arginine 339 are cytoplasmic. A helical membrane pass occupies residues leucine 340–glycine 360. The Periplasmic portion of the chain corresponds to lysine 361 to glutamate 367. A helical transmembrane segment spans residues leucine 368–phenylalanine 388. The Cytoplasmic portion of the chain corresponds to serine 389–alanine 402.

Belongs to the major facilitator superfamily. DHA1 family. MdtH (TC 2.A.1.2.21) subfamily.

It is found in the cell inner membrane. Functionally, confers resistance to norfloxacin and enoxacin. This chain is Multidrug resistance protein MdtH, found in Escherichia coli O139:H28 (strain E24377A / ETEC).